The following is a 106-amino-acid chain: Small ribosomal subunit protein bS16 (106 aa).

It belongs to the bacterial ribosomal protein bS16 family.

The chain is Small ribosomal subunit protein bS16 from Protochlamydia amoebophila (strain UWE25).